A 167-amino-acid chain; its full sequence is Protein-lysine myristoyltransferase RtxC (167 aa).

Active-site residues include His-20 and Asp-89.

Belongs to the RTX toxin acyltransferase family.

It localises to the cytoplasm. It carries out the reaction tetradecanoyl-[ACP] + L-lysyl-[protein] = N(6)-tetradecanoyl-L-lysyl-[protein] + holo-[ACP] + H(+). In terms of biological role, protein-lysine myristoyltransferase that catalyzes myristoylation of the protoxin (RtxA) at two internal lysine residues, thereby converting it to the active toxin. The chain is Protein-lysine myristoyltransferase RtxC from Kingella kingae.